The chain runs to 156 residues: 2-C-methyl-D-erythritol 2,4-cyclodiphosphate synthase (156 aa).

A divalent metal cation contacts are provided by Asp-8 and His-10. Residues 8–10 and 34–35 each bind 4-CDP-2-C-methyl-D-erythritol 2-phosphate; these read DVH and HS. Position 42 (His-42) interacts with a divalent metal cation. 4-CDP-2-C-methyl-D-erythritol 2-phosphate contacts are provided by residues 56-58, 61-65, 100-106, 132-135, and Phe-139; these read DIG, FPDTD, AQRPKMA, and TTEE.

This sequence belongs to the IspF family. As to quaternary structure, homotrimer. A divalent metal cation serves as cofactor.

The enzyme catalyses 4-CDP-2-C-methyl-D-erythritol 2-phosphate = 2-C-methyl-D-erythritol 2,4-cyclic diphosphate + CMP. Its pathway is isoprenoid biosynthesis; isopentenyl diphosphate biosynthesis via DXP pathway; isopentenyl diphosphate from 1-deoxy-D-xylulose 5-phosphate: step 4/6. In terms of biological role, involved in the biosynthesis of isopentenyl diphosphate (IPP) and dimethylallyl diphosphate (DMAPP), two major building blocks of isoprenoid compounds. Catalyzes the conversion of 4-diphosphocytidyl-2-C-methyl-D-erythritol 2-phosphate (CDP-ME2P) to 2-C-methyl-D-erythritol 2,4-cyclodiphosphate (ME-CPP) with a corresponding release of cytidine 5-monophosphate (CMP). The sequence is that of 2-C-methyl-D-erythritol 2,4-cyclodiphosphate synthase from Clostridium perfringens (strain ATCC 13124 / DSM 756 / JCM 1290 / NCIMB 6125 / NCTC 8237 / Type A).